A 366-amino-acid chain; its full sequence is NADH-quinone oxidoreductase subunit D (366 aa).

The protein belongs to the complex I 49 kDa subunit family. As to quaternary structure, NDH-1 is composed of 14 different subunits. Subunits NuoB, C, D, E, F, and G constitute the peripheral sector of the complex.

It localises to the cell membrane. It catalyses the reaction a quinone + NADH + 5 H(+)(in) = a quinol + NAD(+) + 4 H(+)(out). Functionally, NDH-1 shuttles electrons from NADH, via FMN and iron-sulfur (Fe-S) centers, to quinones in the respiratory chain. The immediate electron acceptor for the enzyme in this species is believed to be a menaquinone. Couples the redox reaction to proton translocation (for every two electrons transferred, four hydrogen ions are translocated across the cytoplasmic membrane), and thus conserves the redox energy in a proton gradient. This is NADH-quinone oxidoreductase subunit D from Bacillus thuringiensis (strain Al Hakam).